We begin with the raw amino-acid sequence, 702 residues long: Vertnin (702 aa).

The segment at Val-562–Leu-625 is disordered. Residues Gln-570–Arg-582 are compositionally biased toward basic and acidic residues.

It belongs to the vertnin family.

It is found in the nucleus. Functionally, acts as a transcription factor that regulates development of thoracic vertebrae. The protein is Vertnin of Homo sapiens (Human).